A 237-amino-acid chain; its full sequence is Lipid A 1-diphosphate synthase (237 aa).

Residues 1–5 lie on the Cytoplasmic side of the membrane; it reads MIKNL. A helical membrane pass occupies residues 6 to 26; it reads PQIVLLNIVGLALFLSWYIPV. Residues 27–62 lie on the Periplasmic side of the membrane; that stretch reads NHGFWLPIDADIFYFFNQKLVESKAFLWLVALTNNR. The helical transmembrane segment at 63 to 83 threads the bilayer; that stretch reads AFDGCSLLAMGMLMLSFWLKE. Residues 84–90 lie on the Cytoplasmic side of the membrane; the sequence is NAPGRRR. The chain crosses the membrane as a helical span at residues 91 to 111; that stretch reads IVIIGLVMLLTAVVLNQLGQA. Over 112 to 145 the chain is Periplasmic; it reads LIPVKRASPTLTFTDINRVSELLSVPTKDASRDS. Position 167 (Lys167) is a topological domain, cytoplasmic. Residues 168–188 traverse the membrane as a helical segment; sequence VAGLIALIIFVVFAFPRVMIG. Residues 189 to 194 are Periplasmic-facing; that stretch reads AHWFTD. The helical transmembrane segment at 195–215 threads the bilayer; the sequence is IIVGSMTVILIGLPWVLLTPL. Over 216–237 the chain is Cytoplasmic; sequence SDRLITFFDKSLPGKNKHFQNK.

Belongs to the LpxT phosphotransferase family.

It is found in the cell inner membrane. The catalysed reaction is di-trans,octa-cis-undecaprenyl diphosphate + alpha-Kdo-(2-&gt;4)-alpha-Kdo-(2-&gt;6)-lipid A (E. coli) = (Kdo)2-lipid A 1-diphosphate + di-trans,octa-cis-undecaprenyl phosphate. It participates in bacterial outer membrane biogenesis; lipopolysaccharide biosynthesis. With respect to regulation, inhibited by BasR. This regulation does not occur at the level of transcription, but rather following the assembly of LpxT into the inner membrane. In terms of biological role, involved in the modification of the lipid A domain of lipopolysaccharides (LPS). Transfers a phosphate group from undecaprenyl pyrophosphate (C55-PP) to lipid A to form lipid A 1-diphosphate. Contributes to the recycling of undecaprenyl phosphate (C55-P). In vitro, has low undecaprenyl-diphosphate phosphatase activity. This Escherichia coli (strain K12) protein is Lipid A 1-diphosphate synthase.